The following is a 251-amino-acid chain: 1-(5-phosphoribosyl)-5-[(5-phosphoribosylamino)methylideneamino] imidazole-4-carboxamide isomerase (251 aa).

Catalysis depends on D8, which acts as the Proton acceptor. Residue D131 is the Proton donor of the active site.

This sequence belongs to the HisA/HisF family.

Its subcellular location is the cytoplasm. The catalysed reaction is 1-(5-phospho-beta-D-ribosyl)-5-[(5-phospho-beta-D-ribosylamino)methylideneamino]imidazole-4-carboxamide = 5-[(5-phospho-1-deoxy-D-ribulos-1-ylimino)methylamino]-1-(5-phospho-beta-D-ribosyl)imidazole-4-carboxamide. It participates in amino-acid biosynthesis; L-histidine biosynthesis; L-histidine from 5-phospho-alpha-D-ribose 1-diphosphate: step 4/9. The chain is 1-(5-phosphoribosyl)-5-[(5-phosphoribosylamino)methylideneamino] imidazole-4-carboxamide isomerase from Burkholderia lata (strain ATCC 17760 / DSM 23089 / LMG 22485 / NCIMB 9086 / R18194 / 383).